Reading from the N-terminus, the 171-residue chain is Shikimate kinase (171 aa).

11–16 (ATGKTT) lines the ATP pocket. Residue Thr15 participates in Mg(2+) binding. Positions 33, 57, and 79 each coordinate substrate. Position 117 (Arg117) interacts with ATP. Arg136 lines the substrate pocket.

Belongs to the shikimate kinase family. As to quaternary structure, monomer. Mg(2+) serves as cofactor.

The protein localises to the cytoplasm. The catalysed reaction is shikimate + ATP = 3-phosphoshikimate + ADP + H(+). It participates in metabolic intermediate biosynthesis; chorismate biosynthesis; chorismate from D-erythrose 4-phosphate and phosphoenolpyruvate: step 5/7. Functionally, catalyzes the specific phosphorylation of the 3-hydroxyl group of shikimic acid using ATP as a cosubstrate. The chain is Shikimate kinase from Thermoanaerobacter pseudethanolicus (strain ATCC 33223 / 39E) (Clostridium thermohydrosulfuricum).